The following is a 592-amino-acid chain: NADH-ubiquinone oxidoreductase chain 5 (592 aa).

14 helical membrane passes run 36-56, 68-88, 89-109, 132-152, 169-189, 196-216, 229-249, 256-276, 279-299, 322-342, 364-386, 406-426, 451-471, and 534-554; these read LSMVVMVPVGIVTLSVLIYAI, FYIILSVFAIFMTVLVISDNY, IMMFMGWEFVGVVSYLLISFW, LFVICIGTMLSYFHAVDFETM, MMLLMAATAKSAQLGLHGWLL, TPVSALTHAATMVCSGVFVLV, LLVMLWLAGFTTLMSGLMAVV, VMALSTMSQLAMMMLAMGSSA, LAMYHLYCHAFFKALLFMSAG, LPFSYTTMLMASLSLMAMPGL, YIMYYIATASATLTAIYSLRVTY, STHMAMPMFILTIYSMFLGYA, LPAMFKLLPLMLGLSLSLTTV, and ALINIPVLLMMNMTYTFIVFF.

It belongs to the complex I subunit 5 family.

It is found in the mitochondrion inner membrane. The catalysed reaction is a ubiquinone + NADH + 5 H(+)(in) = a ubiquinol + NAD(+) + 4 H(+)(out). Core subunit of the mitochondrial membrane respiratory chain NADH dehydrogenase (Complex I) that is believed to belong to the minimal assembly required for catalysis. Complex I functions in the transfer of electrons from NADH to the respiratory chain. The immediate electron acceptor for the enzyme is believed to be ubiquinone. The polypeptide is NADH-ubiquinone oxidoreductase chain 5 (ND5) (Debaryomyces hansenii (strain ATCC 36239 / CBS 767 / BCRC 21394 / JCM 1990 / NBRC 0083 / IGC 2968) (Yeast)).